A 230-amino-acid chain; its full sequence is Ribosomal RNA small subunit methyltransferase I (230 aa).

It belongs to the methyltransferase superfamily. RsmI family.

It localises to the cytoplasm. The catalysed reaction is cytidine(1402) in 16S rRNA + S-adenosyl-L-methionine = 2'-O-methylcytidine(1402) in 16S rRNA + S-adenosyl-L-homocysteine + H(+). Functionally, catalyzes the 2'-O-methylation of the ribose of cytidine 1402 (C1402) in 16S rRNA. The sequence is that of Ribosomal RNA small subunit methyltransferase I from Hydrogenobaculum sp. (strain Y04AAS1).